The following is a 267-amino-acid chain: MKEQGLPAVNIIACASPLLCTTTSSDCVSVWACELEQPLSDALGKLKDHPVDLGPSTQLLTLRPGGPLPRVAVDLRKRVLDVVAAALLTALFAPLLLLAALAIKLESPGPALFRQTRGGLGGAPFQILKLRTMHCREDGPDVAQAQRGDDRVTRVGRILRAASIDELPQLLNVLRGDMSLVGPRPHATAHDDYYSARIPEYAARYQARPGLTGLAQVRGLRGGTETVELMRQRIAADIDYIQTWSLWRDLKIVLRTVPSLLTTDNAY.

Residues 83–103 (VAAALLTALFAPLLLLAALAI) traverse the membrane as a helical segment.

It belongs to the bacterial sugar transferase family.

Its subcellular location is the cell membrane. It catalyses the reaction di-trans,octa-cis-undecaprenyl phosphate + UDP-alpha-D-glucose = alpha-D-glucosyl di-trans,octa-cis-undecaprenyl diphosphate + UMP. Functionally, is likely the initiating enzyme for holdfast polysaccharide synthesis. Catalyzes the transfer of the glucose-1-phosphate moiety from UDP-Glc onto the carrier lipid undecaprenyl phosphate (C55-P), forming a phosphoanhydride bond yielding to glucosyl-pyrophosphoryl-undecaprenol (Glc-PP-C55). Also possesses a weak galactose-1-P transferase activity. The protein is UDP-glucose:undecaprenyl-phosphate glucose-1-phosphate transferase (pssY) of Caulobacter vibrioides (strain ATCC 19089 / CIP 103742 / CB 15) (Caulobacter crescentus).